The chain runs to 365 residues: Phosphate acyltransferase (365 aa).

The protein belongs to the PlsX family. In terms of assembly, homodimer. Probably interacts with PlsY.

The protein localises to the cytoplasm. The catalysed reaction is a fatty acyl-[ACP] + phosphate = an acyl phosphate + holo-[ACP]. Its pathway is lipid metabolism; phospholipid metabolism. Its function is as follows. Catalyzes the reversible formation of acyl-phosphate (acyl-PO(4)) from acyl-[acyl-carrier-protein] (acyl-ACP). This enzyme utilizes acyl-ACP as fatty acyl donor, but not acyl-CoA. The chain is Phosphate acyltransferase from Klebsiella pneumoniae subsp. pneumoniae (strain ATCC 700721 / MGH 78578).